A 1209-amino-acid polypeptide reads, in one-letter code: Calcium-activated potassium channel subunit alpha-1 (1209 aa).

The span at M1 to G23 shows a compositional bias: gly residues. The segment at M1 to V61 is disordered. The Extracellular segment spans residues M1–M86. Positions R25–A39 are enriched in polar residues. Positions S40–S60 are enriched in low complexity. Residues W87–L107 traverse the membrane as a helical segment. At W108–R178 the chain is on the cytoplasmic side. S-palmitoyl cysteine attachment occurs at residues C118, C119, and C121. A helical transmembrane segment spans residues V179 to S199. Residues S200–T214 lie on the Extracellular side of the membrane. A helical membrane pass occupies residues L215–A235. Topologically, residues A236 to K239 are cytoplasmic. A helical membrane pass occupies residues L240–V260. Over S261–L264 the chain is Extracellular. Residues N265–I285 form a helical; Voltage-sensor membrane-spanning segment. Residues L286 to L300 lie on the Cytoplasmic side of the membrane. Residues V301–V321 traverse the membrane as a helical segment. The Extracellular segment spans residues E322–Q335. An intramembrane region (pore-forming) is located at residues A336–V358. The Selectivity for potassium signature appears at T352–Y355. Residues Y359–L367 are Extracellular-facing. The helical transmembrane segment at F368–I388 threads the bilayer. The Cytoplasmic segment spans residues E389 to R1209. In terms of domain architecture, RCK N-terminal 1 spans R407–I549. 3 residues coordinate Mg(2+): E439, Q462, and E464. A segment S7 region spans residues L556–F576. Positions L613 to I633 are segment S8. D670 carries the phosphothreonine modification. K672 carries the post-translational modification Phosphoserine. The interval C681–H685 is heme-binding motif. The tract at residues E703–R733 is disordered. The residue at position 709 (T709) is a Phosphothreonine. 3 positions are modified to phosphoserine: S711, S724, and S728. The interval V783–L803 is segment S9. The RCK N-terminal 2 domain maps to S785–P929. At T916 the chain carries Phosphothreonine. A phosphoserine mark is found at S924 and S928. The Calcium bowl motif lies at T976–E998. Ca(2+) is bound by residues Q985, D988, D991, and D993. The segment S10 stretch occupies residues F1005–F1025. Residues R1159 to S1184 show a composition bias toward low complexity. Residues R1159 to R1209 form a disordered region. A compositionally biased stretch (basic and acidic residues) spans K1193 to R1209. 2 positions are modified to phosphoserine: S1194 and S1197.

The protein belongs to the potassium channel family. Calcium-activated (TC 1.A.1.3) subfamily. KCa1.1/KCNMA1 sub-subfamily. Homotetramer; which constitutes the calcium-activated potassium channel. Interacts with beta subunits KCNMB1, KCNMB2, KCNMB3 and KCNMB4. Interacts with gamma subunits LRRC26, LRRC38, LRRC52 and LRRC55. Beta and gamma subunits are accessory, and modulate its activity. Interacts with RAB11B. Post-translationally, phosphorylated. Phosphorylation by kinases such as PKA and/or PKG. In smooth muscles, phosphorylation affects its activity. In terms of processing, palmitoylation by ZDHHC22 and ZDHHC23 within the intracellular linker between the S0 and S1 transmembrane domains regulates localization to the plasma membrane. Depalmitoylated by LYPLA1 and LYPLAL1, leading to retard exit from the trans-Golgi network.

The protein localises to the cell membrane. The enzyme catalyses K(+)(in) = K(+)(out). With respect to regulation, ethanol and carbon monoxide-bound heme increase channel activation. Heme inhibits channel activation. Functionally, potassium channel activated by both membrane depolarization or increase in cytosolic Ca(2+) that mediates export of K(+). It is also activated by the concentration of cytosolic Mg(2+). Its activation dampens the excitatory events that elevate the cytosolic Ca(2+) concentration and/or depolarize the cell membrane. It therefore contributes to repolarization of the membrane potential. Plays a key role in controlling excitability in a number of systems, such as regulation of the contraction of smooth muscle, the tuning of hair cells in the cochlea, regulation of transmitter release, and innate immunity. In smooth muscles, its activation by high level of Ca(2+), caused by ryanodine receptors in the sarcoplasmic reticulum, regulates the membrane potential. In cochlea cells, its number and kinetic properties partly determine the characteristic frequency of each hair cell and thereby helps to establish a tonotopic map. Kinetics of KCNMA1 channels are determined by alternative splicing, phosphorylation status and its combination with modulating beta subunits. Highly sensitive to both iberiotoxin (IbTx) and charybdotoxin (CTX). Potassium channel activated by both membrane depolarization or increase in cytosolic Ca(2+) that mediates export of K(+). This chain is Calcium-activated potassium channel subunit alpha-1 (Kcnma1), found in Mus musculus (Mouse).